A 476-amino-acid polypeptide reads, in one-letter code: Protein transport protein Sec61 subunit alpha (476 aa).

Topologically, residues 2–33 are cytoplasmic; sequence GIKFLEVIKPFCAVLPEIQKPERKIQFREKVL. The helical transmembrane segment at 34–53 threads the bilayer; that stretch reads WTAITLFIFLVCCQIPLFGI. The Lumenal portion of the chain corresponds to 54 to 76; sequence MSSDSADPFYWMRVILASNRGTL. The chain crosses the membrane as a helical span at residues 77 to 96; it reads MELGISPIVTSGLIMQLLAG. Residues 97–117 are Cytoplasmic-facing; the sequence is AKIIEVGDTPKDRALFNGAQK. The chain crosses the membrane as a helical span at residues 118–138; sequence LFGMIITIGQAIVYVMTGMYG. The Lumenal segment spans residues 139–144; that stretch reads DPSEMG. A helical transmembrane segment spans residues 145-165; that stretch reads AGICLVIIIQLFVAGLIVLLL. At 166–172 the chain is on the cytoplasmic side; sequence DELLQKG. Residues 173 to 193 form a helical membrane-spanning segment; it reads YGLGSGISLFIATNICETIVW. The Lumenal portion of the chain corresponds to 194-240; that stretch reads KAFSPTTVNTGRGTEFEGAIIALFHLLATRTDKVRALREAFYRQNLP. A helical transmembrane segment spans residues 241 to 261; sequence NLMNLIATVFVFAVVIYFQGF. At 262–288 the chain is on the cytoplasmic side; that stretch reads RVDLPIKSARYRGQYNTYPIKLFYTSN. Residues 289-309 form a helical membrane-spanning segment; that stretch reads IPIILQSALVSNLYVISQMLS. The Lumenal portion of the chain corresponds to 310-354; the sequence is TRFSGNFLVNLLGTWSDTSTGGPARAYPVGGLCYYFSPPESFGSV. The chain crosses the membrane as a helical span at residues 355 to 375; sequence LDDPVHASIYIVFMLGSCAFF. The Cytoplasmic segment spans residues 376–420; the sequence is SKTWIEVSGSSAKDVAKQLKEQQMVMRGHRETSMVHELNRYIPTA. The helical transmembrane segment at 421–441 threads the bilayer; the sequence is AAFGGLCIGGLSVMADFLGAI. Residues 442–445 are Lumenal-facing; it reads GSGT. A helical transmembrane segment spans residues 446 to 462; the sequence is GILLAVTIIYQYFEIFV. The Cytoplasmic portion of the chain corresponds to 463-476; that stretch reads KEQSEMGSMGALLF.

This sequence belongs to the SecY/SEC61-alpha family. As to quaternary structure, the SEC61 channel-forming translocon complex consists of channel-forming core components SEC61A1, SEC61B and SEC61G and different auxiliary components such as SEC62 and SEC63. The SEC61 channel associates with the multi-pass translocon (MPT) complex.

The protein resides in the endoplasmic reticulum membrane. In terms of biological role, component of SEC61 channel-forming translocon complex that mediates transport of signal peptide-containing precursor polypeptides across the endoplasmic reticulum (ER). Forms a ribosome receptor and a gated pore in the ER membrane, both functions required for cotranslational translocation of nascent polypeptides. May cooperate with auxiliary protein SEC62, SEC63 and HSPA5/BiP to enable post-translational transport of small presecretory proteins. The SEC61 channel is also involved in ER membrane insertion of transmembrane proteins: it mediates membrane insertion of the first few transmembrane segments of proteins, while insertion of subsequent transmembrane regions of multi-pass membrane proteins is mediated by the multi-pass translocon (MPT) complex. The polypeptide is Protein transport protein Sec61 subunit alpha (sec61a) (Gadus ogac (Greenland cod)).